Reading from the N-terminus, the 320-residue chain is cUMP-AMP-activated phospholipase (320 aa).

The region spanning 23–204 (LALDGGGAKG…CANNPTLFAI (182 aa)) is the PNPLA domain. A GXGXXG motif is present at residues 27–32 (GGGAKG). A GXSXG motif is present at residues 59–63 (GTSTG). Residue Ser61 is the Nucleophile of the active site. Catalysis depends on Asp191, which acts as the Proton acceptor. A DGA/G motif is present at residues 191–193 (DGG).

The protein belongs to the patatin family.

It carries out the reaction a 1,2-diacyl-sn-glycero-3-phosphocholine + H2O = a 2-acyl-sn-glycero-3-phosphocholine + a fatty acid + H(+). With respect to regulation, phospholipase activity is specifically activated upon 3',3'-cUAMP binding. Is not activated by the other cyclic dinucleotides 3',3'-cGAMP, 3',3'-c-diAMP and 3',3'-c-diGMP. Therefore, is specifically activated by only the nucleotide synthesized from its adjacently encoded nucleotidyltransferase (CdnE). In terms of biological role, effector phospholipase of a CBASS antivirus system. CBASS (cyclic oligonucleotide-based antiphage signaling system) provides immunity against bacteriophage. The CD-NTase protein synthesizes cyclic nucleotides in response to infection; these serve as specific second messenger signals. The signals activate a diverse range of effectors, leading to bacterial cell death and thus abortive phage infection. A type II-A(UA) CBASS system. Its function is as follows. Phospholipase that is activated upon binding to the cyclic dinucleotide (CDN) second messenger 3',3'-cyclic UMP-AMP (3',3'-cUAMP). The sequence is that of cUMP-AMP-activated phospholipase from Escherichia coli.